Consider the following 261-residue polypeptide: NAD-capped RNA hydrolase NudC (261 aa).

Lysine 25 and arginine 69 together coordinate substrate. Residues cysteine 98 and cysteine 101 each contribute to the Zn(2+) site. Glutamate 111 is a binding site for substrate. Residues cysteine 116 and cysteine 119 each contribute to the Zn(2+) site. Tyrosine 124 contacts substrate. In terms of domain architecture, Nudix hydrolase spans proline 125–threonine 248. A divalent metal cation is bound by residues alanine 158, glutamate 174, and glutamate 178. The Nudix box signature appears at glycine 159–asparagine 180. Substrate is bound at residue glutamine 192–serine 199. Position 219 (glutamate 219) interacts with a divalent metal cation. Substrate is bound at residue alanine 241.

It belongs to the Nudix hydrolase family. NudC subfamily. As to quaternary structure, homodimer. Mg(2+) is required as a cofactor. The cofactor is Mn(2+). Requires Zn(2+) as cofactor.

The enzyme catalyses a 5'-end NAD(+)-phospho-ribonucleoside in mRNA + H2O = a 5'-end phospho-adenosine-phospho-ribonucleoside in mRNA + beta-nicotinamide D-ribonucleotide + 2 H(+). It carries out the reaction NAD(+) + H2O = beta-nicotinamide D-ribonucleotide + AMP + 2 H(+). It catalyses the reaction NADH + H2O = reduced beta-nicotinamide D-ribonucleotide + AMP + 2 H(+). Its function is as follows. mRNA decapping enzyme that specifically removes the nicotinamide adenine dinucleotide (NAD) cap from a subset of mRNAs by hydrolyzing the diphosphate linkage to produce nicotinamide mononucleotide (NMN) and 5' monophosphate mRNA. The NAD-cap is present at the 5'-end of some mRNAs and stabilizes RNA against 5'-processing. Has preference for mRNAs with a 5'-end purine. Catalyzes the hydrolysis of a broad range of dinucleotide pyrophosphates. This chain is NAD-capped RNA hydrolase NudC, found in Yersinia enterocolitica serotype O:8 / biotype 1B (strain NCTC 13174 / 8081).